A 379-amino-acid polypeptide reads, in one-letter code: MSELSFDAPVWHHGKALRKGYTTGSCATAAAKVAALMVLRQHLIHQVSIVTPSGVTLCLNVESPHIEGQQAIAAIRKDGGDDVDATHGMLIFARVTLNDSGEITLTGGEGIGTVTRKGIGLPLGSAAINRTPRHTIESAVREAIGPARGADVEIFAPEGEVRAQKTYNSRLGILGGISIIGTTGIVTPMSEESWKRSLSLELEIKRASGLTRVILVPGNHGERFVREQMGVDTQAVVTMSNFVGYMIEEAVRLGFCQIVLVGHPGKLIKIAAGIFHTHSHIADARMETLVAHLALLGAPLELLTLVGDCDTTEAAMEHIEAYGFGHIYNHLARRICLRVMQMLRFTKTPPVCDAILFSFDNHILGSNRPVDEIAKELQC.

This sequence belongs to the CbiD family.

The catalysed reaction is Co-precorrin-5B + S-adenosyl-L-methionine = Co-precorrin-6A + S-adenosyl-L-homocysteine. It participates in cofactor biosynthesis; adenosylcobalamin biosynthesis; cob(II)yrinate a,c-diamide from sirohydrochlorin (anaerobic route): step 6/10. Functionally, catalyzes the methylation of C-1 in cobalt-precorrin-5B to form cobalt-precorrin-6A. This chain is Cobalt-precorrin-5B C(1)-methyltransferase, found in Salmonella dublin (strain CT_02021853).